Reading from the N-terminus, the 298-residue chain is Glycine--tRNA ligase alpha subunit (298 aa).

It belongs to the class-II aminoacyl-tRNA synthetase family. Tetramer of two alpha and two beta subunits.

It is found in the cytoplasm. The enzyme catalyses tRNA(Gly) + glycine + ATP = glycyl-tRNA(Gly) + AMP + diphosphate. The polypeptide is Glycine--tRNA ligase alpha subunit (Gloeothece citriformis (strain PCC 7424) (Cyanothece sp. (strain PCC 7424))).